Consider the following 315-residue polypeptide: Ribosomal protein L11 methyltransferase (315 aa).

S-adenosyl-L-methionine contacts are provided by T163, G184, D206, and N248.

Belongs to the methyltransferase superfamily. PrmA family.

It localises to the cytoplasm. The enzyme catalyses L-lysyl-[protein] + 3 S-adenosyl-L-methionine = N(6),N(6),N(6)-trimethyl-L-lysyl-[protein] + 3 S-adenosyl-L-homocysteine + 3 H(+). Methylates ribosomal protein L11. The sequence is that of Ribosomal protein L11 methyltransferase from Lacticaseibacillus paracasei (strain ATCC 334 / BCRC 17002 / CCUG 31169 / CIP 107868 / KCTC 3260 / NRRL B-441) (Lactobacillus paracasei).